The primary structure comprises 152 residues: Transcriptional regulator MraZ (152 aa).

SpoVT-AbrB domains follow at residues Val-5–Glu-52 and Ala-81–Gln-124.

Belongs to the MraZ family. As to quaternary structure, forms oligomers.

Its subcellular location is the cytoplasm. It localises to the nucleoid. The sequence is that of Transcriptional regulator MraZ from Actinobacillus pleuropneumoniae serotype 5b (strain L20).